A 401-amino-acid chain; its full sequence is Nicotinate phosphoribosyltransferase (401 aa).

Residue H221 is modified to Phosphohistidine; by autocatalysis.

It belongs to the NAPRTase family. Post-translationally, transiently phosphorylated on a His residue during the reaction cycle. Phosphorylation strongly increases the affinity for substrates and increases the rate of nicotinate D-ribonucleotide production. Dephosphorylation regenerates the low-affinity form of the enzyme, leading to product release.

It carries out the reaction nicotinate + 5-phospho-alpha-D-ribose 1-diphosphate + ATP + H2O = nicotinate beta-D-ribonucleotide + ADP + phosphate + diphosphate. The protein operates within cofactor biosynthesis; NAD(+) biosynthesis; nicotinate D-ribonucleotide from nicotinate: step 1/1. Functionally, catalyzes the synthesis of beta-nicotinate D-ribonucleotide from nicotinate and 5-phospho-D-ribose 1-phosphate at the expense of ATP. This Yersinia pseudotuberculosis serotype O:1b (strain IP 31758) protein is Nicotinate phosphoribosyltransferase.